A 396-amino-acid chain; its full sequence is Elongation factor Tu (396 aa).

One can recognise a tr-type G domain in the interval 10–206; sequence KLHVNVGTIG…ALDTHIPNPE (197 aa). Residues 19 to 26 form a G1 region; the sequence is GHVDHGKT. 19 to 26 serves as a coordination point for GTP; it reads GHVDHGKT. A Mg(2+)-binding site is contributed by Thr-26. Residues 60 to 64 are G2; the sequence is GITIS. The G3 stretch occupies residues 81–84; it reads DCPG. GTP is bound by residues 81 to 85 and 136 to 139; these read DCPGH and NKAD. Residues 136–139 are G4; sequence NKAD. The tract at residues 174–176 is G5; the sequence is SAL.

This sequence belongs to the TRAFAC class translation factor GTPase superfamily. Classic translation factor GTPase family. EF-Tu/EF-1A subfamily. Monomer.

It localises to the cytoplasm. It carries out the reaction GTP + H2O = GDP + phosphate + H(+). In terms of biological role, GTP hydrolase that promotes the GTP-dependent binding of aminoacyl-tRNA to the A-site of ribosomes during protein biosynthesis. The polypeptide is Elongation factor Tu (Xylella fastidiosa (strain Temecula1 / ATCC 700964)).